The primary structure comprises 346 residues: Uroporphyrinogen decarboxylase (346 aa).

Substrate-binding positions include 21 to 25 (RQAGR), F40, D71, Y146, S201, and H316.

The protein belongs to the uroporphyrinogen decarboxylase family. In terms of assembly, homodimer.

Its subcellular location is the cytoplasm. The enzyme catalyses uroporphyrinogen III + 4 H(+) = coproporphyrinogen III + 4 CO2. It functions in the pathway porphyrin-containing compound metabolism; protoporphyrin-IX biosynthesis; coproporphyrinogen-III from 5-aminolevulinate: step 4/4. Catalyzes the decarboxylation of four acetate groups of uroporphyrinogen-III to yield coproporphyrinogen-III. This chain is Uroporphyrinogen decarboxylase, found in Rickettsia conorii (strain ATCC VR-613 / Malish 7).